We begin with the raw amino-acid sequence, 201 residues long: Thylakoid membrane protein slr1796 (201 aa).

Residues 16-36 traverse the membrane as a helical segment; the sequence is FLIVSLAFAMLLLGIWGTLPF.

It localises to the cellular thylakoid membrane. This Synechocystis sp. (strain ATCC 27184 / PCC 6803 / Kazusa) protein is Thylakoid membrane protein slr1796.